Here is a 348-residue protein sequence, read N- to C-terminus: VIP36-like protein (348 aa).

A signal peptide spans 1-38 (MAVALGPSGWWQRWRRRLSAREVSRMLLLLLLLGSGQG). Topologically, residues 39 to 313 (PRQVGAGQTF…APLPPLSGLA (275 aa)) are lumenal. The region spanning 49–274 (EYLKREHSLS…DVISLKLFEL (226 aa)) is the L-type lectin-like domain. The a carbohydrate site is built by Ser93 and Asp128. Ca(2+)-binding residues include Asp159, Tyr161, and Asn163. A carbohydrate is bound by residues Tyr161 and Asn163. A glycan (N-linked (GlcNAc...) asparagine) is linked at Asn181. His188 provides a ligand contact to a carbohydrate. A Ca(2+)-binding site is contributed by Asp191. Cys200 and Cys237 are disulfide-bonded. 258–260 (GDL) contacts a carbohydrate. The chain crosses the membrane as a helical span at residues 314–334 (LFLIVFFSLVFSVFAIVIGII). At 335 to 348 (LYNKWQDQSRKRFY) the chain is on the cytoplasmic side. The Endoplasmic reticulum retention signal motif lies at 344–346 (RKR).

It is found in the endoplasmic reticulum membrane. It localises to the golgi apparatus membrane. Functionally, may be involved in the regulation of export from the endoplasmic reticulum of a subset of glycoproteins. May function as a regulator of ERGIC-53. This chain is VIP36-like protein (LMAN2L), found in Bos taurus (Bovine).